A 127-amino-acid chain; its full sequence is Holo-[acyl-carrier-protein] synthase (127 aa).

The Mg(2+) site is built by D9 and E58.

The protein belongs to the P-Pant transferase superfamily. AcpS family. It depends on Mg(2+) as a cofactor.

It is found in the cytoplasm. The enzyme catalyses apo-[ACP] + CoA = holo-[ACP] + adenosine 3',5'-bisphosphate + H(+). In terms of biological role, transfers the 4'-phosphopantetheine moiety from coenzyme A to a Ser of acyl-carrier-protein. This chain is Holo-[acyl-carrier-protein] synthase, found in Shewanella putrefaciens (strain CN-32 / ATCC BAA-453).